The primary structure comprises 408 residues: Arginine biosynthesis bifunctional protein ArgJ (408 aa).

Positions 156, 182, 193, 279, 403, and 408 each coordinate substrate. Thr-193 functions as the Nucleophile in the catalytic mechanism.

Belongs to the ArgJ family. Heterotetramer of two alpha and two beta chains.

It localises to the cytoplasm. The catalysed reaction is N(2)-acetyl-L-ornithine + L-glutamate = N-acetyl-L-glutamate + L-ornithine. It catalyses the reaction L-glutamate + acetyl-CoA = N-acetyl-L-glutamate + CoA + H(+). Its pathway is amino-acid biosynthesis; L-arginine biosynthesis; L-ornithine and N-acetyl-L-glutamate from L-glutamate and N(2)-acetyl-L-ornithine (cyclic): step 1/1. It functions in the pathway amino-acid biosynthesis; L-arginine biosynthesis; N(2)-acetyl-L-ornithine from L-glutamate: step 1/4. Its function is as follows. Catalyzes two activities which are involved in the cyclic version of arginine biosynthesis: the synthesis of N-acetylglutamate from glutamate and acetyl-CoA as the acetyl donor, and of ornithine by transacetylation between N(2)-acetylornithine and glutamate. This is Arginine biosynthesis bifunctional protein ArgJ from Bordetella bronchiseptica (strain ATCC BAA-588 / NCTC 13252 / RB50) (Alcaligenes bronchisepticus).